The following is a 68-amino-acid chain: U4-agatoxin-Ao1a (68 aa).

Positions 1-25 are cleaved as a signal peptide; that stretch reads MKKSTVIVLSLAAFVLLSVMQFSAA. The propeptide occupies 26-36; the sequence is EDIKMEVEEQR. Disulfide bonds link Cys-39–Cys-52, Cys-46–Cys-57, Cys-51–Cys-66, and Cys-59–Cys-64.

Belongs to the neurotoxin 33 family. As to expression, expressed by the venom gland.

It localises to the secreted. The chain is U4-agatoxin-Ao1a from Agelena orientalis (Funnel-web spider).